Reading from the N-terminus, the 426-residue chain is Glutamate-1-semialdehyde 2,1-aminomutase (426 aa).

Residue Lys-265 is modified to N6-(pyridoxal phosphate)lysine.

The protein belongs to the class-III pyridoxal-phosphate-dependent aminotransferase family. HemL subfamily. In terms of assembly, homodimer. Pyridoxal 5'-phosphate is required as a cofactor.

It is found in the cytoplasm. It catalyses the reaction (S)-4-amino-5-oxopentanoate = 5-aminolevulinate. It functions in the pathway porphyrin-containing compound metabolism; protoporphyrin-IX biosynthesis; 5-aminolevulinate from L-glutamyl-tRNA(Glu): step 2/2. This Salmonella typhimurium (strain SL1344) protein is Glutamate-1-semialdehyde 2,1-aminomutase (hemL).